A 468-amino-acid chain; its full sequence is MSLSGMAIRRLITKGVIPVCQVAPLSTSAEGSTNLKEVLSKKIPAHNAKVKSFRTEHGSTVVQNVNIDMIYGGMRSMKGMVTETSVLDPEEGIRFRGYSIPECQKLLPKAKGGEEPLPEAIWWLLCTGDVPSEAQTAAITKEWNARADLPTHVVRMLDNFPDNLHPMAQFIAAIAALNNESKFAGAYARGVAKASYWEYAYEDSMDLLAKLPTVAAIIYRNLYRDGSAVSVIDPKKDWSANFSSMLGYDDPLFAELMRLYLVIHSDHEGGNVSAHTSHLVGSALSDPYLSFSAAMAGLAGPLHGLANQEVLVFLNKIVGEIGFNYTEEQLKEWVWKHLKSGQVVPGYGHAVLRKTDPRYECQREFALKHLPNDDLFKLVSTLYKITPGILLEQGKAKNPWPNVDSHSGVLLQYFGMTEMSFYTVLFGVSRALGCLSQLIWARGMGLPLERPKSHSTDGLIKLALAAKK.

Residues His-303, His-349, and Asp-404 contribute to the active site.

The protein belongs to the citrate synthase family. As to quaternary structure, homodimer.

The protein resides in the mitochondrion matrix. It carries out the reaction oxaloacetate + acetyl-CoA + H2O = citrate + CoA + H(+). It participates in carbohydrate metabolism; tricarboxylic acid cycle; isocitrate from oxaloacetate: step 1/2. The sequence is that of Probable citrate synthase, mitochondrial (cts-1) from Caenorhabditis elegans.